The following is a 76-amino-acid chain: Kappa-scoloptoxin(15)-Ssd3a (76 aa).

Positions 1 to 23 (MEGKIIFICFLVVLLTLPELISS) are cleaved as a signal peptide.

Post-translationally, contains 2 disulfide bonds. In terms of tissue distribution, expressed by the venom gland.

The protein resides in the secreted. Functionally, acts as a voltage-gated potassium channel inhibitor. In Scolopendra dehaani (Thai centipede), this protein is Kappa-scoloptoxin(15)-Ssd3a.